The chain runs to 182 residues: Isopentenyl-diphosphate Delta-isomerase (182 aa).

Residues His-25 and His-32 each contribute to the Mn(2+) site. Residues 30–164 enclose the Nudix hydrolase domain; the sequence is LLHLAFSSWL…PWAFSPWMVM (135 aa). Residue Cys-67 is part of the active site. A Mn(2+)-binding site is contributed by His-69. Glu-87 provides a ligand contact to Mg(2+). Mn(2+) is bound by residues Glu-114 and Glu-116. Residue Glu-116 is part of the active site.

This sequence belongs to the IPP isomerase type 1 family. Homodimer. Requires Mg(2+) as cofactor. Mn(2+) serves as cofactor.

The protein resides in the cytoplasm. The enzyme catalyses isopentenyl diphosphate = dimethylallyl diphosphate. The protein operates within isoprenoid biosynthesis; dimethylallyl diphosphate biosynthesis; dimethylallyl diphosphate from isopentenyl diphosphate: step 1/1. Catalyzes the 1,3-allylic rearrangement of the homoallylic substrate isopentenyl (IPP) to its highly electrophilic allylic isomer, dimethylallyl diphosphate (DMAPP). In Escherichia coli (strain ATCC 8739 / DSM 1576 / NBRC 3972 / NCIMB 8545 / WDCM 00012 / Crooks), this protein is Isopentenyl-diphosphate Delta-isomerase.